The chain runs to 662 residues: uncharacterized protein (662 aa).

Disordered regions lie at residues 1–94 (MSQR…NENN), 107–237 (DHNN…VKYH), 288–328 (ETTS…TPSA), 406–440 (QSSF…PIQM), and 506–580 (QNSI…MVSP). Over residues 25–49 (TTTTTPTPTTTTTTTSSLSSSTSST) the composition is skewed to low complexity. Residues 77 to 87 (DNIKLDNEKTF) show a composition bias toward basic and acidic residues. The span at 109-161 (NNNNNNNNNNNNNNNNNNNNNNNNNNNNNNNNNNNNNNNNNNNNNNNNNNNNN) shows a compositional bias: low complexity. Residues 162-176 (DTQKGTNKNENNCTD) show a composition bias toward polar residues. A compositionally biased stretch (low complexity) spans 183–196 (STSTTSSSETGSST). The segment covering 203 to 212 (KTPQSCLKKS) has biased composition (polar residues). Positions 213–224 (NNNNNDNNNNNN) are enriched in low complexity. The segment covering 226–235 (KTPRSTKKVK) has biased composition (basic residues). Composition is skewed to low complexity over residues 288-308 (ETTS…TPIP), 413-434 (PTNN…TTTP), 515-526 (PTKSSSSTSIQQ), and 535-575 (NINN…NNNN).

This is an uncharacterized protein from Dictyostelium discoideum (Social amoeba).